Reading from the N-terminus, the 177-residue chain is MEDVCYLAGGCFWCMEAVFKDIYGINDVQPGYAGGTTVNPTYEEVCSQRTGHAETVRIRYDPEKISFDDILEIYFSVIDPTTLNRQGEDVGTNYRTAIFYINEYQKERAVNYIKNLEASGKYSKIVVSVEPYKNFYPAEDYHKNYFERHPEQGYCRVVIKPKVEKVRQKFFYKINNQ.

Cys11 is a catalytic residue.

The protein belongs to the MsrA Met sulfoxide reductase family.

It catalyses the reaction L-methionyl-[protein] + [thioredoxin]-disulfide + H2O = L-methionyl-(S)-S-oxide-[protein] + [thioredoxin]-dithiol. The enzyme catalyses [thioredoxin]-disulfide + L-methionine + H2O = L-methionine (S)-S-oxide + [thioredoxin]-dithiol. Functionally, has an important function as a repair enzyme for proteins that have been inactivated by oxidation. Catalyzes the reversible oxidation-reduction of methionine sulfoxide in proteins to methionine. This Picrophilus torridus (strain ATCC 700027 / DSM 9790 / JCM 10055 / NBRC 100828 / KAW 2/3) protein is Peptide methionine sulfoxide reductase MsrA.